A 158-amino-acid polypeptide reads, in one-letter code: NAD(P)H-quinone oxidoreductase subunit J, chloroplastic (158 aa).

Belongs to the complex I 30 kDa subunit family. NDH is composed of at least 16 different subunits, 5 of which are encoded in the nucleus.

The protein localises to the plastid. It is found in the chloroplast thylakoid membrane. It carries out the reaction a plastoquinone + NADH + (n+1) H(+)(in) = a plastoquinol + NAD(+) + n H(+)(out). The catalysed reaction is a plastoquinone + NADPH + (n+1) H(+)(in) = a plastoquinol + NADP(+) + n H(+)(out). In terms of biological role, NDH shuttles electrons from NAD(P)H:plastoquinone, via FMN and iron-sulfur (Fe-S) centers, to quinones in the photosynthetic chain and possibly in a chloroplast respiratory chain. The immediate electron acceptor for the enzyme in this species is believed to be plastoquinone. Couples the redox reaction to proton translocation, and thus conserves the redox energy in a proton gradient. The sequence is that of NAD(P)H-quinone oxidoreductase subunit J, chloroplastic from Daucus carota (Wild carrot).